A 132-amino-acid chain; its full sequence is Small ribosomal subunit protein uS8 (132 aa).

Belongs to the universal ribosomal protein uS8 family. Part of the 30S ribosomal subunit. Contacts proteins S5 and S12.

Its function is as follows. One of the primary rRNA binding proteins, it binds directly to 16S rRNA central domain where it helps coordinate assembly of the platform of the 30S subunit. The polypeptide is Small ribosomal subunit protein uS8 (Mycobacterium sp. (strain KMS)).